A 116-amino-acid polypeptide reads, in one-letter code: Histone H2B (116 aa).

Residues 1-11 are compositionally biased toward basic residues; the sequence is TSGKAAKKAGK. Residues 1 to 25 are disordered; the sequence is TSGKAAKKAGKAQKSITKGDKKKRK. 3 positions are modified to N6-acetyllysine: lysine 4, lysine 11, and lysine 14. O-linked (GlcNAc) serine glycosylation occurs at serine 103. Residue lysine 111 forms a Glycyl lysine isopeptide (Lys-Gly) (interchain with G-Cter in ubiquitin) linkage.

As to quaternary structure, the nucleosome is a histone octamer containing two molecules each of H2A, H2B, H3 and H4 assembled in one H3-H4 heterotetramer and two H2A-H2B heterodimers. The octamer wraps approximately 147 bp of DNA. In terms of processing, monoubiquitination gives a specific tag for epigenetic transcriptional activation and is also prerequisite for histone H3 'Lys-4' and 'Lys-79' methylation. GlcNAcylation at Ser-103 promotes monoubiquitination of Lys-111. It fluctuates in response to extracellular glucose, and associates with transcribed genes.

The protein localises to the nucleus. Its subcellular location is the chromosome. Functionally, core component of nucleosome. Nucleosomes wrap and compact DNA into chromatin, limiting DNA accessibility to the cellular machineries which require DNA as a template. Histones thereby play a central role in transcription regulation, DNA repair, DNA replication and chromosomal stability. DNA accessibility is regulated via a complex set of post-translational modifications of histones, also called histone code, and nucleosome remodeling. In terms of biological role, a mixture of histones H2B and H4 has antimicrobial activity against the Gram-positive bacterium M.luteus. In Penaeus vannamei (Whiteleg shrimp), this protein is Histone H2B.